The following is a 232-amino-acid chain: MSNVDHAEIAKFEALAHRWWDRESEFKPLHDINPLRVNWIDERAGLAGKTVLDVGCGGGILSEAMAQRGASVTGIDMGEAPLAVARLHQLESGVAVDYRQITAEQMAEEMPGQFDVVTCLEMLEHVPDPASVIRACHRLVKPGGQVFLSTINRNPKAYLFAVIGAEYILQLLPRGTHDFRKFIRPSELGAWSRDAGLEVKDIIGLTYNPLTKHYKLANDVDVNYMVQTQREA.

S-adenosyl-L-methionine is bound by residues R36, G55, D76, and L120.

Belongs to the methyltransferase superfamily. UbiG/COQ3 family.

The catalysed reaction is a 3-demethylubiquinol + S-adenosyl-L-methionine = a ubiquinol + S-adenosyl-L-homocysteine + H(+). The enzyme catalyses a 3-(all-trans-polyprenyl)benzene-1,2-diol + S-adenosyl-L-methionine = a 2-methoxy-6-(all-trans-polyprenyl)phenol + S-adenosyl-L-homocysteine + H(+). It participates in cofactor biosynthesis; ubiquinone biosynthesis. Its function is as follows. O-methyltransferase that catalyzes the 2 O-methylation steps in the ubiquinone biosynthetic pathway. The protein is Ubiquinone biosynthesis O-methyltransferase of Pseudomonas paraeruginosa (strain DSM 24068 / PA7) (Pseudomonas aeruginosa (strain PA7)).